The chain runs to 820 residues: Sucrose synthase 2 (820 aa).

The GT-B glycosyltransferase stretch occupies residues 276–753 (MVFNVVILSP…GLKRIYEKYT (478 aa)).

It belongs to the glycosyltransferase 1 family. Plant sucrose synthase subfamily.

The catalysed reaction is an NDP-alpha-D-glucose + D-fructose = a ribonucleoside 5'-diphosphate + sucrose + H(+). Its function is as follows. Sucrose-cleaving enzyme that provides UDP-glucose and fructose for various metabolic pathways. The polypeptide is Sucrose synthase 2 (Tulipa gesneriana (Garden tulip)).